The following is a 160-amino-acid chain: Cyclic pyranopterin monophosphate synthase (160 aa).

Substrate is bound by residues 73-75 and 110-111; these read LCH and ME. Residue Asp-125 is part of the active site.

The protein belongs to the MoaC family. As to quaternary structure, homohexamer; trimer of dimers.

The enzyme catalyses (8S)-3',8-cyclo-7,8-dihydroguanosine 5'-triphosphate = cyclic pyranopterin phosphate + diphosphate. The protein operates within cofactor biosynthesis; molybdopterin biosynthesis. Catalyzes the conversion of (8S)-3',8-cyclo-7,8-dihydroguanosine 5'-triphosphate to cyclic pyranopterin monophosphate (cPMP). The chain is Cyclic pyranopterin monophosphate synthase from Pseudomonas aeruginosa (strain LESB58).